The primary structure comprises 215 residues: Redox-sensing transcriptional repressor Rex 2 (215 aa).

The H-T-H motif DNA-binding region spans 15–54; sequence VYLRYLKMLGDSGVKRIKSREFSEMIQIPSATIRRDFSHV. 89 to 94 serves as a coordination point for NAD(+); it reads GCGNLG.

The protein belongs to the transcriptional regulatory Rex family. Homodimer.

It localises to the cytoplasm. In terms of biological role, modulates transcription in response to changes in cellular NADH/NAD(+) redox state. This Enterococcus faecalis (strain ATCC 700802 / V583) protein is Redox-sensing transcriptional repressor Rex 2.